Here is a 406-residue protein sequence, read N- to C-terminus: Cysteine desulfurase (406 aa).

Lys-226 carries the N6-(pyridoxal phosphate)lysine modification. Catalysis depends on Cys-364, which acts as the Cysteine persulfide intermediate.

The protein belongs to the class-V pyridoxal-phosphate-dependent aminotransferase family. Csd subfamily. As to quaternary structure, homodimer. Interacts with SufE and the SufBCD complex composed of SufB, SufC and SufD. The interaction with SufE is required to mediate the direct transfer of the sulfur atom from the S-sulfanylcysteine. Requires pyridoxal 5'-phosphate as cofactor.

The protein localises to the cytoplasm. The catalysed reaction is (sulfur carrier)-H + L-cysteine = (sulfur carrier)-SH + L-alanine. It carries out the reaction L-selenocysteine + AH2 = hydrogenselenide + L-alanine + A + H(+). The protein operates within cofactor biosynthesis; iron-sulfur cluster biosynthesis. Its function is as follows. Cysteine desulfurases mobilize the sulfur from L-cysteine to yield L-alanine, an essential step in sulfur metabolism for biosynthesis of a variety of sulfur-containing biomolecules. Component of the suf operon, which is activated and required under specific conditions such as oxidative stress and iron limitation. Acts as a potent selenocysteine lyase in vitro, that mobilizes selenium from L-selenocysteine. Selenocysteine lyase activity is however unsure in vivo. The chain is Cysteine desulfurase from Salmonella choleraesuis (strain SC-B67).